The following is a 284-amino-acid chain: L-ribulose-5-phosphate 3-epimerase UlaE (284 aa).

It belongs to the L-ribulose-5-phosphate 3-epimerase family.

It catalyses the reaction L-ribulose 5-phosphate = L-xylulose 5-phosphate. It functions in the pathway cofactor degradation; L-ascorbate degradation; D-xylulose 5-phosphate from L-ascorbate: step 3/4. In terms of biological role, catalyzes the isomerization of L-xylulose-5-phosphate to L-ribulose-5-phosphate. Is involved in the anaerobic L-ascorbate utilization. In Escherichia coli O157:H7 (strain EC4115 / EHEC), this protein is L-ribulose-5-phosphate 3-epimerase UlaE.